The sequence spans 445 residues: 3-phosphoshikimate 1-carboxyvinyltransferase (445 aa).

A disordered region spans residues 1–25 (MTDSNQPTPLQARKSGALHGTARVP). K28, S29, and R33 together coordinate 3-phosphoshikimate. Residue K28 coordinates phosphoenolpyruvate. G101 and R129 together coordinate phosphoenolpyruvate. 3-phosphoshikimate-binding residues include S175, Q177, D328, and K355. Residue Q177 coordinates phosphoenolpyruvate. The active-site Proton acceptor is the D328. Residues R359 and R402 each contribute to the phosphoenolpyruvate site.

This sequence belongs to the EPSP synthase family. As to quaternary structure, monomer.

It localises to the cytoplasm. It catalyses the reaction 3-phosphoshikimate + phosphoenolpyruvate = 5-O-(1-carboxyvinyl)-3-phosphoshikimate + phosphate. The protein operates within metabolic intermediate biosynthesis; chorismate biosynthesis; chorismate from D-erythrose 4-phosphate and phosphoenolpyruvate: step 6/7. Its function is as follows. Catalyzes the transfer of the enolpyruvyl moiety of phosphoenolpyruvate (PEP) to the 5-hydroxyl of shikimate-3-phosphate (S3P) to produce enolpyruvyl shikimate-3-phosphate and inorganic phosphate. This is 3-phosphoshikimate 1-carboxyvinyltransferase from Rhodopseudomonas palustris (strain TIE-1).